The following is a 115-amino-acid chain: ER exit protein (115 aa).

This sequence belongs to the STEEP1 family.

Functionally, may stimulate membrane curvature formation and subsequent endoplasmic reticulum exit site (ERES) establishment. The polypeptide is ER exit protein (Schizosaccharomyces pombe (strain 972 / ATCC 24843) (Fission yeast)).